Consider the following 1448-residue polypeptide: Protein clueless (1448 aa).

Disordered regions lie at residues 1–96, 110–129, and 265–286; these read MALE…HAEK, NANV…ADGD, and RTRP…VSDP. Composition is skewed to low complexity over residues 9–26 and 41–66; these read NSNA…TKAS and NLNP…ADGP. The segment covering 68-77 has biased composition (basic residues); it reads AKKKGKKNRN. Over residues 78–88 the composition is skewed to polar residues; it reads KSPTEPTTEAV. A Phosphoserine modification is found at Ser270. The 243-residue stretch at 424–666 folds into the Clu domain; it reads RAEDAFSSKL…RTFPPDVNFL (243 aa). Disordered regions lie at residues 726–773, 958–1010, and 1414–1448; these read SEKS…SGEA, AVSS…SASD, and GEAE…ATSS. The span at 748 to 769 shows a compositional bias: basic and acidic residues; it reads GAEKPDDKEKKNEEEEKKERST. Positions 966–981 are enriched in basic residues; it reads KKRGNGGKHNKHKSSK. A compositionally biased stretch (low complexity) spans 986–1007; that stretch reads QQQQQTTGNQNGSSSGSSNSSS. Positions 1419 to 1429 are enriched in basic and acidic residues; that stretch reads AVSKDIKEQPE.

It belongs to the CLU family.

It localises to the cytoplasm. Its function is as follows. mRNA-binding protein involved in proper cytoplasmic distribution of mitochondria. The chain is Protein clueless from Drosophila melanogaster (Fruit fly).